The sequence spans 150 residues: Oleosin Ara h 10.0102 (150 aa).

A run of 2 helical transmembrane segments spans residues valine 39–alanine 59 and leucine 73–alanine 93.

The protein belongs to the oleosin family. As to expression, expressed in seeds (at protein level).

It is found in the lipid droplet. The protein localises to the membrane. In terms of biological role, may have a structural role to stabilize the lipid body during desiccation of the seed by preventing coalescence of the oil. Probably interacts with both lipid and phospholipid moieties of lipid bodies. May also provide recognition signals for specific lipase anchorage in lipolysis during seedling growth. The sequence is that of Oleosin Ara h 10.0102 from Arachis hypogaea (Peanut).